The sequence spans 502 residues: UDP-N-acetylmuramate--L-alanine ligase (502 aa).

119-125 (GSHGKST) provides a ligand contact to ATP.

This sequence belongs to the MurCDEF family.

The protein localises to the cytoplasm. The enzyme catalyses UDP-N-acetyl-alpha-D-muramate + L-alanine + ATP = UDP-N-acetyl-alpha-D-muramoyl-L-alanine + ADP + phosphate + H(+). It functions in the pathway cell wall biogenesis; peptidoglycan biosynthesis. Cell wall formation. This chain is UDP-N-acetylmuramate--L-alanine ligase, found in Frankia casuarinae (strain DSM 45818 / CECT 9043 / HFP020203 / CcI3).